The sequence spans 527 residues: Arginine--tRNA ligase (527 aa).

A 'HIGH' region motif is present at residues 111-121; that stretch reads ANPTGPLHIGH.

It belongs to the class-I aminoacyl-tRNA synthetase family. In terms of assembly, monomer.

It localises to the cytoplasm. It catalyses the reaction tRNA(Arg) + L-arginine + ATP = L-arginyl-tRNA(Arg) + AMP + diphosphate. In Campylobacter concisus (strain 13826), this protein is Arginine--tRNA ligase.